We begin with the raw amino-acid sequence, 288 residues long: Dichloromethane dehalogenase (288 aa).

The GST N-terminal domain occupies 12-94; the sequence is KTLRLLYHPA…YVNEKFDGAG (83 aa). The 153-residue stretch at 100–252 folds into the GST C-terminal domain; sequence GTQERAQINQ…ASMFKRKTAV (153 aa).

This sequence belongs to the GST superfamily. Homohexamer.

Its subcellular location is the cytoplasm. The enzyme catalyses dichloromethane + H2O = formaldehyde + 2 chloride + 2 H(+). The protein operates within xenobiotic degradation; dichloromethane degradation. The chain is Dichloromethane dehalogenase (dcmA) from Methylorubrum extorquens (strain DSM 6343 / CIP 106787 / DM4) (Methylobacterium extorquens).